The following is a 368-amino-acid chain: Phenylalanine--tRNA ligase alpha subunit (368 aa).

Mg(2+) is bound at residue E268.

The protein belongs to the class-II aminoacyl-tRNA synthetase family. Phe-tRNA synthetase alpha subunit type 1 subfamily. As to quaternary structure, tetramer of two alpha and two beta subunits. Requires Mg(2+) as cofactor.

The protein localises to the cytoplasm. The catalysed reaction is tRNA(Phe) + L-phenylalanine + ATP = L-phenylalanyl-tRNA(Phe) + AMP + diphosphate + H(+). This is Phenylalanine--tRNA ligase alpha subunit from Nitrobacter hamburgensis (strain DSM 10229 / NCIMB 13809 / X14).